The primary structure comprises 501 residues: Cytochrome P450 7A1 (501 aa).

A helical transmembrane segment spans residues I4–M24. C441 provides a ligand contact to heme.

This sequence belongs to the cytochrome P450 family. Heme is required as a cofactor.

It localises to the endoplasmic reticulum membrane. The protein resides in the microsome membrane. It catalyses the reaction cholesterol + reduced [NADPH--hemoprotein reductase] + O2 = 7alpha-hydroxycholesterol + oxidized [NADPH--hemoprotein reductase] + H2O + H(+). The enzyme catalyses 4beta-hydroxycholesterol + reduced [NADPH--hemoprotein reductase] + O2 = 4beta,7alpha-dihydroxycholesterol + oxidized [NADPH--hemoprotein reductase] + H2O + H(+). The catalysed reaction is lathosterol + reduced [NADPH--hemoprotein reductase] + O2 = 7alpha,8alpha-epoxy-5alpha-cholestan-3beta-ol + oxidized [NADPH--hemoprotein reductase] + H2O + H(+). It carries out the reaction lathosterol + reduced [NADPH--hemoprotein reductase] + O2 = 5alpha-cholestan-7-oxo-3beta-ol + oxidized [NADPH--hemoprotein reductase] + H2O + H(+). It catalyses the reaction 7-dehydrocholesterol + reduced [NADPH--hemoprotein reductase] + O2 = 7-oxocholesterol + oxidized [NADPH--hemoprotein reductase] + H2O + H(+). The enzyme catalyses (24S)-hydroxycholesterol + reduced [NADPH--hemoprotein reductase] + O2 = (24S)-7alpha-dihydroxycholesterol + oxidized [NADPH--hemoprotein reductase] + H2O + H(+). The catalysed reaction is (24R)-hydroxycholesterol + reduced [NADPH--hemoprotein reductase] + O2 = (24R)-7alpha-dihydroxycholesterol + oxidized [NADPH--hemoprotein reductase] + H2O + H(+). The protein operates within lipid metabolism; bile acid biosynthesis. Its pathway is steroid metabolism; cholesterol degradation. Its function is as follows. A cytochrome P450 monooxygenase involved in the metabolism of endogenous cholesterol and its oxygenated derivatives (oxysterols). Mechanistically, uses molecular oxygen inserting one oxygen atom into a substrate, and reducing the second into a water molecule, with two electrons provided by NADPH via cytochrome P450 reductase (CPR; NADPH-ferrihemoprotein reductase). Functions as a critical regulatory enzyme of bile acid biosynthesis and cholesterol homeostasis. Catalyzes the hydroxylation of carbon hydrogen bond at 7-alpha position of cholesterol, a rate-limiting step in cholesterol catabolism and bile acid biosynthesis. 7-alpha hydroxylates several oxysterols, including 4beta-hydroxycholesterol and 24-hydroxycholesterol. Catalyzes the oxidation of the 7,8 double bond of 7-dehydrocholesterol and lathosterol with direct and predominant formation of the 7-keto derivatives. In Sus scrofa (Pig), this protein is Cytochrome P450 7A1 (CYP7A1).